A 715-amino-acid polypeptide reads, in one-letter code: Polyribonucleotide nucleotidyltransferase (715 aa).

2 residues coordinate Mg(2+): aspartate 487 and aspartate 493. The 60-residue stretch at 554 to 613 folds into the KH domain; the sequence is PRIETFKIATDKIREVIGTGGKVIREIVEKTGAKVNIDDDGTVKVASSDGESIKAAIKWI. In terms of domain architecture, S1 motif spans 623–691; the sequence is NAIYDGTVVK…DRGKTRLSMK (69 aa). Residues 696–715 form a disordered region; that stretch reads ETGEDLEAKQKAAEGATAAE.

The protein belongs to the polyribonucleotide nucleotidyltransferase family. The cofactor is Mg(2+).

It localises to the cytoplasm. It catalyses the reaction RNA(n+1) + phosphate = RNA(n) + a ribonucleoside 5'-diphosphate. Its function is as follows. Involved in mRNA degradation. Catalyzes the phosphorolysis of single-stranded polyribonucleotides processively in the 3'- to 5'-direction. This is Polyribonucleotide nucleotidyltransferase from Rhodopseudomonas palustris (strain BisB18).